The sequence spans 96 residues: (4S)-4-hydroxy-5-phosphonooxypentane-2,3-dione isomerase (96 aa).

Residues H2 to F91 form the ABM domain.

Belongs to the LsrG family. Homodimer.

The protein localises to the cytoplasm. The catalysed reaction is (2S)-2-hydroxy-3,4-dioxopentyl phosphate = 3-hydroxy-2,4-dioxopentyl phosphate. In terms of biological role, involved in the degradation of phospho-AI-2, thereby terminating induction of the lsr operon and closing the AI-2 signaling cycle. Catalyzes the conversion of (4S)-4-hydroxy-5-phosphonooxypentane-2,3-dione (P-DPD) to 3-hydroxy-5-phosphonooxypentane-2,4-dione (P-HPD). The chain is (4S)-4-hydroxy-5-phosphonooxypentane-2,3-dione isomerase from Yersinia enterocolitica serotype O:8 / biotype 1B (strain NCTC 13174 / 8081).